We begin with the raw amino-acid sequence, 750 residues long: NAD(P)H-quinone oxidoreductase subunit 5, chloroplastic (750 aa).

16 helical membrane passes run 9–29 (WIIP…LLLF), 40–60 (WAFT…NLSI), 89–109 (IDPL…MVLI), 125–145 (FAYM…SNLI), 147–167 (IYIF…FWFT), 185–205 (GDFG…SFEF), 230–250 (AALL…HIWL), 258–278 (TPIS…FLVA), 283–303 (LFIV…ITVL), 327–347 (LGYM…FHLI), 354–374 (ALLF…VGYS), 396–416 (TSFL…CFWS), 425–445 (WLYS…TAFY), 548–568 (LFPL…GIPF), 607–627 (IFSV…YKPI), and 724–744 (LFFY…FYLF).

Belongs to the complex I subunit 5 family. In terms of assembly, NDH is composed of at least 16 different subunits, 5 of which are encoded in the nucleus.

It localises to the plastid. The protein resides in the chloroplast thylakoid membrane. It catalyses the reaction a plastoquinone + NADH + (n+1) H(+)(in) = a plastoquinol + NAD(+) + n H(+)(out). The enzyme catalyses a plastoquinone + NADPH + (n+1) H(+)(in) = a plastoquinol + NADP(+) + n H(+)(out). NDH shuttles electrons from NAD(P)H:plastoquinone, via FMN and iron-sulfur (Fe-S) centers, to quinones in the photosynthetic chain and possibly in a chloroplast respiratory chain. The immediate electron acceptor for the enzyme in this species is believed to be plastoquinone. Couples the redox reaction to proton translocation, and thus conserves the redox energy in a proton gradient. This is NAD(P)H-quinone oxidoreductase subunit 5, chloroplastic (ndhF) from Tecoma stans (Yellow bells).